Here is a 170-residue protein sequence, read N- to C-terminus: Adenine phosphoribosyltransferase (170 aa).

The protein belongs to the purine/pyrimidine phosphoribosyltransferase family. In terms of assembly, homodimer.

It is found in the cytoplasm. It carries out the reaction AMP + diphosphate = 5-phospho-alpha-D-ribose 1-diphosphate + adenine. It functions in the pathway purine metabolism; AMP biosynthesis via salvage pathway; AMP from adenine: step 1/1. In terms of biological role, catalyzes a salvage reaction resulting in the formation of AMP, that is energically less costly than de novo synthesis. The polypeptide is Adenine phosphoribosyltransferase (Thermosipho africanus (strain TCF52B)).